A 462-amino-acid chain; its full sequence is ESX-1 secretion system protein EccE1 (462 aa).

2 helical membrane-spanning segments follow: residues 9–29 (FSTG…IAFL) and 34–54 (WWAG…TFYG).

Belongs to the EccE family. Part of the ESX-1 / type VII secretion system (T7SS), which is composed of cytosolic and membrane components. The ESX-1 membrane complex is composed of EccB1, EccCa1, EccCb1, EccD1 and EccE1.

It localises to the cell inner membrane. In terms of biological role, part of the ESX-1 specialized secretion system, which delivers several virulence factors to host cells during infection, including the key virulence factors EsxA (ESAT-6) and EsxB (CFP-10). The polypeptide is ESX-1 secretion system protein EccE1 (Mycobacterium tuberculosis (strain CDC 1551 / Oshkosh)).